Consider the following 148-residue polypeptide: MHDSLTIALLQAREAAMSYFRPIVKRHNLTEQQWRIVRILAESPSMDFHDLAYRACILRPSLTGILTRMERDGLVLRLKPINDQRKLYISLTKEGQALYNRAQTQIEEAYRQIEAQFTAEKMQQLTHLLEEFIALGNSRQEDIPGDNE.

Residues 2–134 (HDSLTIALLQ…LTHLLEEFIA (133 aa)) enclose the HTH marR-type domain.

Its function is as follows. Repressor for the homoprotocatechuate catabolic pathway hpc operon. The chain is Homoprotocatechuate degradative operon repressor (hpcR) from Escherichia coli.